We begin with the raw amino-acid sequence, 274 residues long: tRNA-cytidine(32) 2-sulfurtransferase (274 aa).

Residues 40–45 carry the PP-loop motif motif; sequence SGGKDS. 3 residues coordinate [4Fe-4S] cluster: C115, C118, and C206.

It belongs to the TtcA family. As to quaternary structure, homodimer. It depends on Mg(2+) as a cofactor. [4Fe-4S] cluster is required as a cofactor.

The protein localises to the cytoplasm. It carries out the reaction cytidine(32) in tRNA + S-sulfanyl-L-cysteinyl-[cysteine desulfurase] + AH2 + ATP = 2-thiocytidine(32) in tRNA + L-cysteinyl-[cysteine desulfurase] + A + AMP + diphosphate + H(+). It functions in the pathway tRNA modification. In terms of biological role, catalyzes the ATP-dependent 2-thiolation of cytidine in position 32 of tRNA, to form 2-thiocytidine (s(2)C32). The sulfur atoms are provided by the cysteine/cysteine desulfurase (IscS) system. This Azotobacter vinelandii (strain DJ / ATCC BAA-1303) protein is tRNA-cytidine(32) 2-sulfurtransferase.